The sequence spans 173 residues: ATP synthase subunit b (173 aa).

The chain crosses the membrane as a helical span at residues 12–32; it reads LDVNPGLVVWTLITFLVVVLV.

Belongs to the ATPase B chain family. As to quaternary structure, F-type ATPases have 2 components, F(1) - the catalytic core - and F(0) - the membrane proton channel. F(1) has five subunits: alpha(3), beta(3), gamma(1), delta(1), epsilon(1). F(0) has three main subunits: a(1), b(2) and c(10-14). The alpha and beta chains form an alternating ring which encloses part of the gamma chain. F(1) is attached to F(0) by a central stalk formed by the gamma and epsilon chains, while a peripheral stalk is formed by the delta and b chains.

The protein resides in the cell inner membrane. Functionally, f(1)F(0) ATP synthase produces ATP from ADP in the presence of a proton or sodium gradient. F-type ATPases consist of two structural domains, F(1) containing the extramembraneous catalytic core and F(0) containing the membrane proton channel, linked together by a central stalk and a peripheral stalk. During catalysis, ATP synthesis in the catalytic domain of F(1) is coupled via a rotary mechanism of the central stalk subunits to proton translocation. Its function is as follows. Component of the F(0) channel, it forms part of the peripheral stalk, linking F(1) to F(0). This is ATP synthase subunit b from Leptospira borgpetersenii serovar Hardjo-bovis (strain JB197).